The sequence spans 92 residues: Small ribosomal subunit protein uS19c (92 aa).

Belongs to the universal ribosomal protein uS19 family.

The protein resides in the plastid. It is found in the chloroplast. Protein S19 forms a complex with S13 that binds strongly to the 16S ribosomal RNA. This Vitis vinifera (Grape) protein is Small ribosomal subunit protein uS19c.